The primary structure comprises 2200 residues: Bromodomain and WD repeat-containing DDB_G0285837 (2200 aa).

Disordered stretches follow at residues 137–178, 194–245, and 259–288; these read GFND…SNTN, VTPT…TTPP, and DIQQ…NNNN. 3 stretches are compositionally biased toward low complexity: residues 161 to 176, 203 to 242, and 259 to 273; these read NNNN…SNSN, NTTN…TTLT, and DIQQ…QQQQ. WD repeat units follow at residues 352 to 391, 394 to 433, 442 to 483, 548 to 586, 591 to 630, 653 to 691, 694 to 736, and 741 to 780; these read GHKA…LIAT, GHLG…YDSI, SVNN…HVIS, GKTN…PKLV, GHPT…KWDH, RSKA…FHLE, EHTS…KKFV, and GFQC…DINN. Acidic residues-rich tracts occupy residues 918–933 and 955–968; these read DDEI…EDFN and QDDD…EDYD. Disordered stretches follow at residues 918–1180, 1262–1297, 1461–1538, and 1662–1703; these read DDEI…NHLT, NNNN…DDDD, ENNQ…NNNN, and NFNS…NNNN. The segment covering 974–1000 has biased composition (basic residues); the sequence is MSTRKKSKIKADKRKKRLLKQSKKFTR. Residues 1052-1074 show a composition bias toward acidic residues; that stretch reads GEIEMDDDDQYLNDNILDSDDND. Positions 1109 to 1132 are enriched in low complexity; the sequence is SSDNSSENDSSANGSDSDYSGSKS. Residues 1133–1164 are compositionally biased toward basic residues; sequence NKNKRGDKSKRNKKGKKNVKNKKVQKRGRKKS. 2 stretches are compositionally biased toward low complexity: residues 1262-1292 and 1461-1525; these read NNNN…QQIN and ENNQ…NSLN. Residues 1722–1823 enclose the Bromo domain; sequence EKIENLKKEM…HRISDILKEA (102 aa). A disordered region spans residues 1850–2200; sequence DKDDSQLDDE…RGRGRPPKSN (351 aa). Low complexity predominate over residues 1878–1888; it reads LANNNHGNNKS. A compositionally biased stretch (polar residues) spans 1910 to 1920; the sequence is TGKNITRSLLS. A compositionally biased stretch (low complexity) spans 1945–1958; that stretch reads TTTTTTTTTTTSST. 3 stretches are compositionally biased toward acidic residues: residues 2016-2028, 2057-2073, and 2104-2113; these read DYND…DNDG, EDED…EEDY, and SEEEEDEDQS. Low complexity predominate over residues 2114 to 2124; sequence DVNSNNNSDNE. A compositionally biased stretch (acidic residues) spans 2125 to 2138; sequence SGGEDGYSGEDGSE. Positions 2170-2185 are enriched in low complexity; sequence SFKNNNNNNNINNNVN. The span at 2190–2200 shows a compositional bias: basic residues; the sequence is KRGRGRPPKSN.

The protein is Bromodomain and WD repeat-containing DDB_G0285837 of Dictyostelium discoideum (Social amoeba).